Reading from the N-terminus, the 323-residue chain is Aldo-keto reductase family 1 member C4 (323 aa).

NADP(+) contacts are provided by residues 20–24 (GFGTY) and Asp-50. Tyr-55 serves as the catalytic Proton donor. His-117 provides a ligand contact to substrate. Residues 166–167 (SN), Gln-190, 216–221 (HSALGT), and 270–280 (KSYNEQRIREN) each bind NADP(+).

It belongs to the aldo/keto reductase family. As to quaternary structure, monomer.

It is found in the cytoplasm. Its subcellular location is the cytosol. It catalyses the reaction chlordecone alcohol + NADP(+) = chlordecone + NADPH + H(+). The enzyme catalyses a 3alpha-hydroxysteroid + NADP(+) = a 3-oxosteroid + NADPH + H(+). The catalysed reaction is a 3alpha-hydroxysteroid + NAD(+) = a 3-oxosteroid + NADH + H(+). It carries out the reaction 5alpha-androstane-3alpha,17beta-diol + NADP(+) = 17beta-hydroxy-5alpha-androstan-3-one + NADPH + H(+). It catalyses the reaction 5alpha-androstane-3beta,17beta-diol + NADP(+) = 17beta-hydroxy-5alpha-androstan-3-one + NADPH + H(+). The enzyme catalyses 5alpha-androstane-3alpha,17beta-diol + NAD(+) = 17beta-hydroxy-5alpha-androstan-3-one + NADH + H(+). The catalysed reaction is 17beta-estradiol + NADP(+) = estrone + NADPH + H(+). It carries out the reaction 17beta-estradiol + NAD(+) = estrone + NADH + H(+). It catalyses the reaction (20S)-hydroxypregn-4-en-3-one + NADP(+) = progesterone + NADPH + H(+). The enzyme catalyses (20S)-hydroxypregn-4-en-3-one + NAD(+) = progesterone + NADH + H(+). The catalysed reaction is androsterone + NADP(+) = 5alpha-androstan-3,17-dione + NADPH + H(+). It carries out the reaction testosterone + NADP(+) = androst-4-ene-3,17-dione + NADPH + H(+). It catalyses the reaction testosterone + NAD(+) = androst-4-ene-3,17-dione + NADH + H(+). The enzyme catalyses 3alpha-hydroxy-5alpha-androstane 17-O-(beta-D-glucuronate) + NADP(+) = 5alpha-dihydrotestosterone 17-O-(beta-D-glucuronate) + NADPH + H(+). The catalysed reaction is (3beta,5alpha,17beta)-3-hydroxy-androstan-17-yl sulfate + NADP(+) = 5alpha-dihydrotestosterone sulfate + NADPH + H(+). It carries out the reaction 5alpha-androstane-3alpha,17beta-diol + NAD(+) = androsterone + NADH + H(+). Its pathway is steroid metabolism. Its function is as follows. Cytosolic aldo-keto reductase that catalyzes the NADH and NADPH-dependent reduction of ketosteroids to hydroxysteroids. Liver specific enzyme that acts as an NAD(P)(H)-dependent 3-, 17- and 20-ketosteroid reductase on the steroid nucleus and side chain. Displays the ability to catalyze both oxidation and reduction in vitro, but most probably acts as a reductase in vivo since the oxidase activity measured in vitro is inhibited by physiological concentration of NADPH. Acts preferentially as a 3-alpha-hydroxysteroid dehydrogenase (HSD) with a subsidiary 3-beta-HSD activity. Catalyzes efficiently the transformation of the potent androgen 5-alpha-dihydrotestosterone (5alpha-DHT or 17beta-hydroxy-5alpha-androstan-3-one) into the less active form, 5-alpha-androstan-3-alpha,17-beta-diol (3-alpha-diol). Catalyzes the reduction of estrone into 17beta-estradiol but with low efficiency. Metabolizes a broad spectrum of natural and synthetic therapeutic steroid and plays an important role in metabolism of androgens, estrogens, progestereone and conjugated steroids. Catalyzes the biotransformation of the pesticide chlordecone (kepone) to its corresponding alcohol leading to increased biliary excretion of the pesticide and concomitant reduction of its neurotoxicity since bile is the major excretory route. The protein is Aldo-keto reductase family 1 member C4 (AKR1C4) of Macaca fascicularis (Crab-eating macaque).